A 296-amino-acid chain; its full sequence is Ribosomal RNA small subunit methyltransferase A (296 aa).

S-adenosyl-L-methionine-binding residues include asparagine 32, leucine 34, glycine 59, glutamate 80, aspartate 105, and asparagine 130.

This sequence belongs to the class I-like SAM-binding methyltransferase superfamily. rRNA adenine N(6)-methyltransferase family. RsmA subfamily.

The protein resides in the cytoplasm. It carries out the reaction adenosine(1518)/adenosine(1519) in 16S rRNA + 4 S-adenosyl-L-methionine = N(6)-dimethyladenosine(1518)/N(6)-dimethyladenosine(1519) in 16S rRNA + 4 S-adenosyl-L-homocysteine + 4 H(+). Its function is as follows. Specifically dimethylates two adjacent adenosines (A1518 and A1519) in the loop of a conserved hairpin near the 3'-end of 16S rRNA in the 30S particle. May play a critical role in biogenesis of 30S subunits. The chain is Ribosomal RNA small subunit methyltransferase A from Lactiplantibacillus plantarum (strain ATCC BAA-793 / NCIMB 8826 / WCFS1) (Lactobacillus plantarum).